The primary structure comprises 417 residues: uncharacterized protein (417 aa).

Transmembrane regions (helical) follow at residues 1–21, 32–52, 96–116, 168–188, 192–212, 261–281, 286–306, 351–371, and 392–412; these read MSVL…VLLS, VVGA…VPAG, VLPI…LGIM, LFAI…AGYA, VPLT…LLFA, IAFV…GGWF, LTLQ…IGVT, AIIT…ILIG, and VIAG…FIGL.

Belongs to the concentrative nucleoside transporter (CNT) (TC 2.A.41) family.

Its subcellular location is the cell inner membrane. This is an uncharacterized protein from Haemophilus influenzae (strain ATCC 51907 / DSM 11121 / KW20 / Rd).